The sequence spans 326 residues: MSANLKYLSLGILVFQTTSLVLTMRYSRTLKEEGPRYLSSTAVVVAEFLKIMACIFLVYKDSKCSVRTLNRVLHDEILNKPMETLKLAIPSGIYTLQNNLLYVALSNLDAATYQVTYQLKILTTALFSVSMLGKKLGMYQWLSLVILMAGVAFVQWPSDSQELNSKDLSTGSQFVGLMAVLIACFSSGFAGVYFEKILKETKQSVWIRNIQLGFFGSIFGLMGVYVYDGELVSKNGFFQGYNQLTWIVVVLQALGGLVIAAVIKYADNILKGFATSLSIILSTIISYFWLQDFVPTSVFFLGAILVIAATFLYGYDPKPAGNPTKA.

Helical transmembrane passes span 4 to 24 (NLKYLSLGILVFQTTSLVLTM), 38 to 58 (LSSTAVVVAEFLKIMACIFLV), 136 to 156 (LGMYQWLSLVILMAGVAFVQW), 174 to 194 (FVGLMAVLIACFSSGFAGVYF), 212 to 232 (LGFFGSIFGLMGVYVYDGELV), 243 to 263 (QLTWIVVVLQALGGLVIAAVI), 269 to 289 (ILKGFATSLSIILSTIISYFW), and 293 to 313 (FVPTSVFFLGAILVIAATFLY).

The protein belongs to the nucleotide-sugar transporter family. SLC35A subfamily. Interacts with SLC35A2; the interaction is reduced in the presence of SLC35A4. Found in a complex with SLC35A2 and SLC35A4. Interacts with MGAT4B. In terms of processing, O-Glcnacylation regulates the stability of SLC35A3 and the specific complex formation with MGAT4B.

It localises to the golgi apparatus membrane. It catalyses the reaction UMP(out) + UDP-N-acetyl-alpha-D-glucosamine(in) = UMP(in) + UDP-N-acetyl-alpha-D-glucosamine(out). Functionally, transports diphosphate-N-acetylglucosamine (UDP-GlcNAc) from the cytosol into the lumen of the Golgi apparatus, functioning as an antiporter that exchanges UDP-N-acetyl-alpha-D-glucosamine for UMP. May supply UDP-GlcNAc as substrate for Golgi-resident glycosyltransferases that generate highly branched, multiantennary complex N-glycans and keratan sulfate. However, the exact role of SLC35A3 still needs to be elucidated, it could be a member of a catalytically more efficient multiprotein complex rather than function independently as a single transporter. This chain is UDP-N-acetylglucosamine transporter (Slc35a3), found in Rattus norvegicus (Rat).